The sequence spans 150 residues: Lipoprotein signal peptidase (150 aa).

Transmembrane regions (helical) follow at residues 58 to 78 and 85 to 107; these read FFII…FKST and SFSL…GYVV. Active-site residues include D108 and D122. The helical transmembrane segment at 117-137 threads the bilayer; that stretch reads VFNLADFFITGGVLLLTFLIL.

This sequence belongs to the peptidase A8 family.

It localises to the cell membrane. The enzyme catalyses Release of signal peptides from bacterial membrane prolipoproteins. Hydrolyzes -Xaa-Yaa-Zaa-|-(S,diacylglyceryl)Cys-, in which Xaa is hydrophobic (preferably Leu), and Yaa (Ala or Ser) and Zaa (Gly or Ala) have small, neutral side chains.. It participates in protein modification; lipoprotein biosynthesis (signal peptide cleavage). This protein specifically catalyzes the removal of signal peptides from prolipoproteins. This chain is Lipoprotein signal peptidase, found in Caldicellulosiruptor bescii (strain ATCC BAA-1888 / DSM 6725 / KCTC 15123 / Z-1320) (Anaerocellum thermophilum).